Reading from the N-terminus, the 245-residue chain is Orotidine 5'-phosphate decarboxylase (245 aa).

Substrate-binding positions include D22, K44, D71–T80, T131, R192, Q201, G221, and R222. The active-site Proton donor is K73.

It belongs to the OMP decarboxylase family. Type 1 subfamily. In terms of assembly, homodimer.

It catalyses the reaction orotidine 5'-phosphate + H(+) = UMP + CO2. It participates in pyrimidine metabolism; UMP biosynthesis via de novo pathway; UMP from orotate: step 2/2. Its function is as follows. Catalyzes the decarboxylation of orotidine 5'-monophosphate (OMP) to uridine 5'-monophosphate (UMP). In Escherichia coli O45:K1 (strain S88 / ExPEC), this protein is Orotidine 5'-phosphate decarboxylase.